The sequence spans 457 residues: Bifunctional protein GlmU (457 aa).

A pyrophosphorylase region spans residues 1 to 229; that stretch reads MYNCAIILAA…YEEIMGVNSR (229 aa). Residues 8–11, Lys22, Gln73, and 78–79 each bind UDP-N-acetyl-alpha-D-glucosamine; these read LAAG and GT. Asp103 provides a ligand contact to Mg(2+). Positions 140, 155, 170, and 227 each coordinate UDP-N-acetyl-alpha-D-glucosamine. Asn227 contributes to the Mg(2+) binding site. Residues 230–250 are linker; it reads VQLSEAEIVMRKRINHKHMVN. The N-acetyltransferase stretch occupies residues 251 to 457; sequence GVTFIDCEST…WLDKKGLLKK (207 aa). Residues Arg332 and Lys350 each contribute to the UDP-N-acetyl-alpha-D-glucosamine site. The Proton acceptor role is filled by His362. UDP-N-acetyl-alpha-D-glucosamine is bound by residues Tyr365 and Asn376. Acetyl-CoA contacts are provided by residues 385–386, Ala422, and Arg439; that span reads NY.

This sequence in the N-terminal section; belongs to the N-acetylglucosamine-1-phosphate uridyltransferase family. In the C-terminal section; belongs to the transferase hexapeptide repeat family. Homotrimer. Mg(2+) is required as a cofactor.

It is found in the cytoplasm. The catalysed reaction is alpha-D-glucosamine 1-phosphate + acetyl-CoA = N-acetyl-alpha-D-glucosamine 1-phosphate + CoA + H(+). The enzyme catalyses N-acetyl-alpha-D-glucosamine 1-phosphate + UTP + H(+) = UDP-N-acetyl-alpha-D-glucosamine + diphosphate. Its pathway is nucleotide-sugar biosynthesis; UDP-N-acetyl-alpha-D-glucosamine biosynthesis; N-acetyl-alpha-D-glucosamine 1-phosphate from alpha-D-glucosamine 6-phosphate (route II): step 2/2. It functions in the pathway nucleotide-sugar biosynthesis; UDP-N-acetyl-alpha-D-glucosamine biosynthesis; UDP-N-acetyl-alpha-D-glucosamine from N-acetyl-alpha-D-glucosamine 1-phosphate: step 1/1. It participates in bacterial outer membrane biogenesis; LPS lipid A biosynthesis. Functionally, catalyzes the last two sequential reactions in the de novo biosynthetic pathway for UDP-N-acetylglucosamine (UDP-GlcNAc). The C-terminal domain catalyzes the transfer of acetyl group from acetyl coenzyme A to glucosamine-1-phosphate (GlcN-1-P) to produce N-acetylglucosamine-1-phosphate (GlcNAc-1-P), which is converted into UDP-GlcNAc by the transfer of uridine 5-monophosphate (from uridine 5-triphosphate), a reaction catalyzed by the N-terminal domain. This chain is Bifunctional protein GlmU, found in Clostridium botulinum (strain ATCC 19397 / Type A).